We begin with the raw amino-acid sequence, 391 residues long: Beta sliding clamp (391 aa).

This sequence belongs to the beta sliding clamp family. Forms a ring-shaped head-to-tail homodimer around DNA which binds and tethers DNA polymerases and other proteins to the DNA. The DNA replisome complex has a single clamp-loading complex (3 tau and 1 each of delta, delta', psi and chi subunits) which binds 3 Pol III cores (1 core on the leading strand and 2 on the lagging strand) each with a beta sliding clamp dimer. Additional proteins in the replisome are other copies of gamma, psi and chi, Ssb, DNA helicase and RNA primase.

The protein resides in the cytoplasm. Confers DNA tethering and processivity to DNA polymerases and other proteins. Acts as a clamp, forming a ring around DNA (a reaction catalyzed by the clamp-loading complex) which diffuses in an ATP-independent manner freely and bidirectionally along dsDNA. Initially characterized for its ability to contact the catalytic subunit of DNA polymerase III (Pol III), a complex, multichain enzyme responsible for most of the replicative synthesis in bacteria; Pol III exhibits 3'-5' exonuclease proofreading activity. The beta chain is required for initiation of replication as well as for processivity of DNA replication. This chain is Beta sliding clamp (dnaN), found in Synechocystis sp. (strain ATCC 27184 / PCC 6803 / Kazusa).